The primary structure comprises 132 residues: Transcriptional repressor SmtB homolog (132 aa).

Zn(2+) contacts are provided by C20, H26, C71, C73, D114, H116, H127, and E130. The HTH arsR-type domain maps to 38–132 (MSLDQAQQMA…EVADHLQESD (95 aa)). The H-T-H motif DNA-binding region spans 72 to 91 (VCDLAAAMKVSESAVSHQLR).

In terms of assembly, homodimer.

Its function is as follows. Transcriptional repressor of the expression of the ziaA gene. Controls zinc homeostasis by triggering ZiaA-mediated efflux of excess zinc into the periplasm. The sequence is that of Transcriptional repressor SmtB homolog (ziaR) from Synechocystis sp. (strain ATCC 27184 / PCC 6803 / Kazusa).